Reading from the N-terminus, the 66-residue chain is uncharacterized protein (66 aa).

The interval 1 to 21 (MPGGDRTGPWGQGPRTGRRAG) is disordered.

This is an uncharacterized protein from Archaeoglobus fulgidus (strain ATCC 49558 / DSM 4304 / JCM 9628 / NBRC 100126 / VC-16).